A 296-amino-acid chain; its full sequence is Enoyl-CoA hydratase ACTT3 (296 aa).

The Peroxisomal targeting signal type 1 motif lies at 294–296; the sequence is PKL.

The protein belongs to the enoyl-CoA hydratase/isomerase family.

It is found in the peroxisome. It carries out the reaction a (3S)-3-hydroxyacyl-CoA = a (2E)-enoyl-CoA + H2O. The enzyme catalyses a 4-saturated-(3S)-3-hydroxyacyl-CoA = a (3E)-enoyl-CoA + H2O. It functions in the pathway mycotoxin biosynthesis. In terms of biological role, enoyl-CoA hydratase; part of the gene clusters that mediate the biosynthesis of the host-selective toxins (HSTs) ACT-toxins responsible for brown spot of tangerine disease by the tangerine pathotype which affects tangerines and mandarins. ACT-toxins consist of three moieties, 9,10-epoxy-8-hydroxy-9-methyl-decatrienoic acid (EDA), valine and a polyketide. ACT-toxin I is toxic to both citrus and pear; toxin II the 5''-deoxy derivative of ACT-toxin I, is highly toxic to pear and slightly toxic to citrus. On cellular level, ACT-toxins affect plasma membrane of susceptible cells and cause a sudden increase in loss of K(+) after a few minutes of toxin treatment. The acyl-CoA ligase ACTT1, the hydrolase ACTT2, the enoyl-CoA hydratases ACTT3 and ACTT6, and the acyl-CoA synthetase ACTT5 are all involved in the biosynthesis of the AK-, AF- and ACT-toxin common 9,10-epoxy-8-hydroxy-9-methyl-decatrienoic acid (EDA) structural moiety. The exact role of each enzyme, and of additional enzymes identified within the AF-toxin clusters have still to be determined. On the other hand, ACTTS1 to ACTTS4 are specific to the tangerine pathotype. The function of ACTTS3 is to elongate the polyketide chain portion of ACT-toxin that is unique to this toxin. The enoyl-reductase ACTTS2 might complement the missing enoyl-reductase (ER) domain in ACTTS3 in the synthesis of the polyketide portion of ACT-toxin. The roles of the nonribosomal peptide synthetases-related proteins ACTTS1 and ACTTS4 have also still not been elucidated. In Alternaria alternata (Alternaria rot fungus), this protein is Enoyl-CoA hydratase ACTT3.